The sequence spans 199 residues: dITP/XTP pyrophosphatase (199 aa).

8–13 provides a ligand contact to substrate; it reads SGNAGK. The active-site Proton acceptor is Asp69. Asp69 is a binding site for Mg(2+). Substrate contacts are provided by residues Ser70, 154-157, Lys177, and 182-183; these read FGYN and HR.

This sequence belongs to the HAM1 NTPase family. Homodimer. The cofactor is Mg(2+).

The catalysed reaction is XTP + H2O = XMP + diphosphate + H(+). The enzyme catalyses dITP + H2O = dIMP + diphosphate + H(+). It carries out the reaction ITP + H2O = IMP + diphosphate + H(+). Functionally, pyrophosphatase that catalyzes the hydrolysis of nucleoside triphosphates to their monophosphate derivatives, with a high preference for the non-canonical purine nucleotides XTP (xanthosine triphosphate), dITP (deoxyinosine triphosphate) and ITP. Seems to function as a house-cleaning enzyme that removes non-canonical purine nucleotides from the nucleotide pool, thus preventing their incorporation into DNA/RNA and avoiding chromosomal lesions. In Xylella fastidiosa (strain 9a5c), this protein is dITP/XTP pyrophosphatase.